Here is a 68-residue protein sequence, read N- to C-terminus: Lividin-1 (68 aa).

Positions 1–22 (MFTLKKSLLLLFFLGTINLSLC) are cleaved as a signal peptide. Residues 23–42 (QEERNADEEERRDERNVEVE) constitute a propeptide that is removed on maturation. Cys-62 and Cys-68 are disulfide-bonded.

As to expression, expressed by the skin glands.

The protein localises to the secreted. Functionally, antimicrobial peptide. The polypeptide is Lividin-1 (Odorrana livida (Green mountain frog)).